Consider the following 335-residue polypeptide: Acyl-CoA Delta(11) desaturase (335 aa).

3 consecutive transmembrane segments (helical) span residues 39–59 (LLTF…CFTS), 64–84 (TIIL…AGAH), and 98–118 (LQII…IHWI). The short motif at 84-89 (HRLWAH) is the Histidine box-1 element. Positions 121–125 (HRMHH) match the Histidine box-2 motif. The next 2 helical transmembrane spans lie at 182–202 (AIPF…MYFW) and 213–235 (TMLR…HLYG). Positions 261–265 (HNYHH) match the Histidine box-3 motif. Positions 312–335 (MKRTGDGTDVSGQKYSCESSEVLQ) are disordered. Residues 321 to 335 (VSGQKYSCESSEVLQ) show a composition bias toward polar residues.

This sequence belongs to the fatty acid desaturase type 1 family. Fe cation is required as a cofactor. Detected in pheromone gland.

Its subcellular location is the membrane. The enzyme catalyses an 11,12-saturated fatty acyl-CoA + 2 Fe(II)-[cytochrome b5] + O2 + 2 H(+) = an (11Z)-Delta(11)-fatty acyl-CoA + 2 Fe(III)-[cytochrome b5] + 2 H2O. Its function is as follows. Catalyzes the formation of Delta(11) fatty acyl precursors in the pheromone gland, with a preference for myristic acid. The chain is Acyl-CoA Delta(11) desaturase from Choristoneura rosaceana (Oblique banded leafroller).